A 256-amino-acid polypeptide reads, in one-letter code: MSLKKSPFFELRSGSVDTLLFTVKTTDLDALRAELVKRFEATPEFFADDVVAIDVRRLAEGERVALSDIRQMLNDVRMRPVGVVAQASQAWAAEAGLPLLEARDRRGATAKPEPADEAEPPVAAAAAEAVPEPAPELAPSAPTTGAQTLVIDRPLRSGQQIYAKGDLVVLAPVSHGAEIIAEGNIHIYAPLRGRALAGVHGNHDARIFCTCLEPELISIAGIYRTTENPLPADILGKAVQIRLEEEKLMIEPLRLT.

Residues 105 to 143 (RRGATAKPEPADEAEPPVAAAAAEAVPEPAPELAPSAPT) form a disordered region. Low complexity predominate over residues 120–142 (PPVAAAAAEAVPEPAPELAPSAP).

This sequence belongs to the MinC family. Interacts with MinD and FtsZ.

Functionally, cell division inhibitor that blocks the formation of polar Z ring septums. Rapidly oscillates between the poles of the cell to destabilize FtsZ filaments that have formed before they mature into polar Z rings. Prevents FtsZ polymerization. This is Probable septum site-determining protein MinC from Burkholderia vietnamiensis (strain G4 / LMG 22486) (Burkholderia cepacia (strain R1808)).